Reading from the N-terminus, the 458-residue chain is Flavohemoprotein (458 aa).

In terms of domain architecture, Globin spans 2-158 (PLSEDTIKAV…LAHLFVRREE (157 aa)). His107 provides a ligand contact to heme b. Catalysis depends on charge relay system residues Tyr117 and Glu157. Positions 169–457 (GGWRQTRSFR…FEMFGPFKPL (289 aa)) are reductase. The 108-residue stretch at 172-279 (RQTRSFRVEE…APPYGDFFLE (108 aa)) folds into the FAD-binding FR-type domain. FAD contacts are provided by residues Tyr211 and 228 to 231 (RQYS). 320-325 (GIGQTP) is an NADP(+) binding site. Residue 450–453 (MFGP) participates in FAD binding.

This sequence belongs to the globin family. Two-domain flavohemoproteins subfamily. The protein in the C-terminal section; belongs to the flavoprotein pyridine nucleotide cytochrome reductase family. As to quaternary structure, monomer. Heme b serves as cofactor. It depends on FAD as a cofactor.

It catalyses the reaction 2 nitric oxide + NADPH + 2 O2 = 2 nitrate + NADP(+) + H(+). The catalysed reaction is 2 nitric oxide + NADH + 2 O2 = 2 nitrate + NAD(+) + H(+). Its function is as follows. Flavohemoprotein involved in nitric oxide (NO) detoxification in an aerobic process, termed nitric oxide dioxygenase (NOD) reaction that utilizes O(2) and NAD(P)H to convert NO to nitrate, which protects the protozoan parasite from various noxious nitrogen compounds. Therefore, plays a central role in the inducible response to nitrosative stress. May also be involved in O(2) detoxification. The chain is Flavohemoprotein (hmpA) from Giardia intestinalis (strain ATCC 50581 / GS clone H7) (Giardia lamblia).